The sequence spans 272 residues: MIPPKRNKHFFVKIVLALEYDGRGYCGWQKQPGCLSVQSRLESALSGVAGRQIQVVAAGRTDAGVHALCQVVHLETCVRRPLNAWIRGTNALLPGDISILEASEVSDDFHARFSATERTYLYYLLSRPARPGIHHGKIGWVHYPLDLEKMQMAAKLLIGKHDFSAFRSSECQSRTAIRQLTRLNISQHQQLFVFEFCANAFLHHMVRNILGGLVYIGRGKYPPEWMRILLEKRDRTLAAPTFSPDGLYLSGVRYDARWNLPVFNVTRPLDII.

Asp-62 acts as the Nucleophile in catalysis. Tyr-120 is a substrate binding site.

The protein belongs to the tRNA pseudouridine synthase TruA family. As to quaternary structure, homodimer.

It catalyses the reaction uridine(38/39/40) in tRNA = pseudouridine(38/39/40) in tRNA. In terms of biological role, formation of pseudouridine at positions 38, 39 and 40 in the anticodon stem and loop of transfer RNAs. The sequence is that of tRNA pseudouridine synthase A from Nitrosomonas europaea (strain ATCC 19718 / CIP 103999 / KCTC 2705 / NBRC 14298).